The sequence spans 342 residues: Probable dual-specificity RNA methyltransferase RlmN (342 aa).

Catalysis depends on Glu91, which acts as the Proton acceptor. Residues 97–326 (YKFGNTACVS…CTVRRELGSD (230 aa)) form the Radical SAM core domain. Cys104 and Cys331 are disulfide-bonded. Positions 111, 115, and 118 each coordinate [4Fe-4S] cluster. Residues 157-158 (GE), Ser189, 212-214 (SLH), and Asn288 contribute to the S-adenosyl-L-methionine site. Cys331 serves as the catalytic S-methylcysteine intermediate.

This sequence belongs to the radical SAM superfamily. RlmN family. [4Fe-4S] cluster is required as a cofactor.

It localises to the cytoplasm. It catalyses the reaction adenosine(2503) in 23S rRNA + 2 reduced [2Fe-2S]-[ferredoxin] + 2 S-adenosyl-L-methionine = 2-methyladenosine(2503) in 23S rRNA + 5'-deoxyadenosine + L-methionine + 2 oxidized [2Fe-2S]-[ferredoxin] + S-adenosyl-L-homocysteine. The enzyme catalyses adenosine(37) in tRNA + 2 reduced [2Fe-2S]-[ferredoxin] + 2 S-adenosyl-L-methionine = 2-methyladenosine(37) in tRNA + 5'-deoxyadenosine + L-methionine + 2 oxidized [2Fe-2S]-[ferredoxin] + S-adenosyl-L-homocysteine. Functionally, specifically methylates position 2 of adenine 2503 in 23S rRNA and position 2 of adenine 37 in tRNAs. The sequence is that of Probable dual-specificity RNA methyltransferase RlmN from Caldanaerobacter subterraneus subsp. tengcongensis (strain DSM 15242 / JCM 11007 / NBRC 100824 / MB4) (Thermoanaerobacter tengcongensis).